The primary structure comprises 1084 residues: TNF receptor-associated factor family protein DDB_G0272098 (1084 aa).

The region spanning 19-103 (YYCPDCGELL…KNRYYETKNF (85 aa)) is the LIM zinc-binding domain. TRAF-type zinc fingers lie at residues 122–190 (KHIK…IDHE) and 191–248 (IHLS…YNMS). A coiled-coil region spans residues 265 to 321 (IEEQNQDIKELHNFIENHLSKKFIDLDTIVNIQKYLIKNKNQKISQLTEIIKRVDNS). Disordered regions lie at residues 348–392 (YKNS…NINE), 490–523 (IRQQ…NTTI), 537–656 (NNNI…KDGL), and 709–897 (SIVE…NDDD). Composition is skewed to low complexity over residues 349-375 (KNSN…TNEN), 492-509 (QQQQ…QQQQ), 537-549 (NNNI…NNNK), and 556-570 (ITAA…TTST). A coiled-coil region spans residues 489 to 553 (LIRQQQQQQQ…NNNNNKNNDD (65 aa)). The span at 571 to 586 (HTILNGTNNEASMTDI) shows a compositional bias: polar residues. Residues 587–637 (NETTSTTTTAETTEATASESTEESNNTAETTTTTTTTTTTITTAAETVNST) show a composition bias toward low complexity. Over residues 644-656 (TSEKVEEKGKDGL) the composition is skewed to basic and acidic residues. The stretch at 735-852 (NGNENENENE…NNNNNNNENV (118 aa)) forms a coiled coil. Acidic residues predominate over residues 739-757 (NENENENENENENENENEN). Residues 774 to 785 (SNINTSNDTEPT) are compositionally biased toward polar residues. Basic and acidic residues predominate over residues 790 to 799 (EDIKKNKENE). Residues 809–849 (NNNIKSVEDTNNNNNNNNNNNNNNNNNNNNNNNNNNNNNNN) are compositionally biased toward low complexity. 2 stretches are compositionally biased toward basic and acidic residues: residues 853-864 (YDIKKDRNRENV) and 875-892 (ENGK…SEDK). The MATH domain occupies 909 to 1042 (IFRNQILFKD…DNCFIVNLEV (134 aa)). The disordered stretch occupies residues 1056–1084 (LLQKSSPPAATTTTTTSSSSSKTTPKTKR). Positions 1059-1084 (KSSPPAATTTTTTSSSSSKTTPKTKR) are enriched in low complexity.

It belongs to the TNF receptor-associated factor family.

The protein resides in the cytoplasm. In terms of biological role, probable adapter protein and signal transducer that links members of the tumor necrosis factor receptor family to different signaling pathways by association with the receptor cytoplasmic domain and kinases. The sequence is that of TNF receptor-associated factor family protein DDB_G0272098 from Dictyostelium discoideum (Social amoeba).